Reading from the N-terminus, the 364-residue chain is MQDRQKAQDYRALLLADTPLIDVRAPIEFEQGAMPGAINLPLMMDDERAAVGTCYKRQGADAALALGHRLVCGDIRQQRLEAWKAAYQRFPNGYLCCARGGQRSHIVQRWLQETGIDCPLIEGGYKALRQTAIQATWQLAQKPILLIGGCTGSGKTQLVRQQPNGVDLEGLARHRGSSFGRTLNPQLSQASFENKLAVELLKINARQTLKRWVLEDEGRTIGANHLPECLRERMAQAPIAVVEDPFALRLERLREEYFIRMHHDFTHAYGDEAGWQAYSEYLHHGLFAIRRRLGLQRFAELTDTLDRALAEQLSSGSTDGHMAWLVPLLNEYYDPMYRYQLEKKAANIVFRGPWQDVANWLKAQ.

Positions 14 to 137 constitute a Rhodanese domain; sequence LLADTPLIDV…LRQTAIQATW (124 aa). The active-site S-selanylcysteine intermediate is Cys97.

Belongs to the SelU family. As to quaternary structure, monomer.

It catalyses the reaction 5-methylaminomethyl-2-thiouridine(34) in tRNA + selenophosphate + (2E)-geranyl diphosphate + H2O + H(+) = 5-methylaminomethyl-2-selenouridine(34) in tRNA + (2E)-thiogeraniol + phosphate + diphosphate. The catalysed reaction is 5-methylaminomethyl-2-thiouridine(34) in tRNA + (2E)-geranyl diphosphate = 5-methylaminomethyl-S-(2E)-geranyl-thiouridine(34) in tRNA + diphosphate. It carries out the reaction 5-methylaminomethyl-S-(2E)-geranyl-thiouridine(34) in tRNA + selenophosphate + H(+) = 5-methylaminomethyl-2-(Se-phospho)selenouridine(34) in tRNA + (2E)-thiogeraniol. The enzyme catalyses 5-methylaminomethyl-2-(Se-phospho)selenouridine(34) in tRNA + H2O = 5-methylaminomethyl-2-selenouridine(34) in tRNA + phosphate. Functionally, involved in the post-transcriptional modification of the uridine at the wobble position (U34) of tRNA(Lys), tRNA(Glu) and tRNA(Gln). Catalyzes the conversion of 2-thiouridine (S2U-RNA) to 2-selenouridine (Se2U-RNA). Acts in a two-step process involving geranylation of 2-thiouridine (S2U) to S-geranyl-2-thiouridine (geS2U) and subsequent selenation of the latter derivative to 2-selenouridine (Se2U) in the tRNA chain. This chain is tRNA 2-selenouridine synthase, found in Salmonella choleraesuis (strain SC-B67).